Reading from the N-terminus, the 145-residue chain is Large ribosomal subunit protein uL13 (145 aa).

This sequence belongs to the universal ribosomal protein uL13 family. Part of the 50S ribosomal subunit. Interacts weakly with proteins L3 and L6.

In terms of biological role, this protein is one of the early assembly proteins of the 50S ribosomal subunit. Binds to 23S rRNA. The sequence is that of Large ribosomal subunit protein uL13 from Haloarcula marismortui (strain ATCC 43049 / DSM 3752 / JCM 8966 / VKM B-1809) (Halobacterium marismortui).